We begin with the raw amino-acid sequence, 312 residues long: Coiled-coil domain-containing protein 42 homolog (312 aa).

Coiled-coil stretches lie at residues 34–121 (RLLE…RLKE) and 172–233 (ATHQ…WESQ).

It belongs to the CFAP73 family.

The protein is Coiled-coil domain-containing protein 42 homolog of Nematostella vectensis (Starlet sea anemone).